We begin with the raw amino-acid sequence, 139 residues long: Large ribosomal subunit protein uL16 (139 aa).

The interval 1–21 (MLMPKRVQYRKTQRGRMKGNA) is disordered. Basic residues predominate over residues 7–17 (VQYRKTQRGRM).

Belongs to the universal ribosomal protein uL16 family. As to quaternary structure, part of the 50S ribosomal subunit.

Binds 23S rRNA and is also seen to make contacts with the A and possibly P site tRNAs. The polypeptide is Large ribosomal subunit protein uL16 (Chlorobaculum tepidum (strain ATCC 49652 / DSM 12025 / NBRC 103806 / TLS) (Chlorobium tepidum)).